The chain runs to 252 residues: Type III pantothenate kinase (252 aa).

Residue 6–13 participates in ATP binding; it reads DIGNTSTA. 104–107 contributes to the substrate binding site; the sequence is GADR. Aspartate 106 (proton acceptor) is an active-site residue. Aspartate 128 is a binding site for K(+). Residue threonine 131 participates in ATP binding. Substrate is bound at residue threonine 183.

The protein belongs to the type III pantothenate kinase family. Homodimer. Requires NH4(+) as cofactor. It depends on K(+) as a cofactor.

The protein localises to the cytoplasm. It carries out the reaction (R)-pantothenate + ATP = (R)-4'-phosphopantothenate + ADP + H(+). It participates in cofactor biosynthesis; coenzyme A biosynthesis; CoA from (R)-pantothenate: step 1/5. Catalyzes the phosphorylation of pantothenate (Pan), the first step in CoA biosynthesis. The sequence is that of Type III pantothenate kinase from Thermus thermophilus (strain ATCC 27634 / DSM 579 / HB8).